A 96-amino-acid polypeptide reads, in one-letter code: UPF0235 protein ESA_00387 (96 aa).

Belongs to the UPF0235 family.

In Cronobacter sakazakii (strain ATCC BAA-894) (Enterobacter sakazakii), this protein is UPF0235 protein ESA_00387.